The sequence spans 444 residues: Zinc finger CCCH domain-containing protein 63 (444 aa).

3 consecutive C3H1-type zinc fingers follow at residues 56–84, 101–129, and 147–175; these read RIGE…HPAD, RIGQ…HPRE, and RPNE…HPQP. The segment at 251-276 is disordered; the sequence is GSSSSDDQQRTAGGAQYYTGSRHSET. C3H1-type zinc fingers lie at residues 309–337 and 355–383; these read RPDQ…HPKE and RPGE…HPMG. A disordered region spans residues 405-444; the sequence is PVPAHSEVSPDNVSGRSRRITHSDSQQIPSGERGTEREAS.

This Oryza sativa subsp. japonica (Rice) protein is Zinc finger CCCH domain-containing protein 63.